A 37-amino-acid chain; its full sequence is Esculentin-2SE (37 aa).

Residues Cys-31 and Cys-37 are joined by a disulfide bond.

In terms of tissue distribution, expressed by the skin glands.

It localises to the secreted. Its function is as follows. Mast cell degranulating peptide. Causes histamine release from rat peritoneal mast cells in vitro. Has antibacterial activity against the Gram-negative bacterium E.coli K12 and Gram-positive bacterium M.luteus NCT C2665. This Lithobates sevosus (Dusky gopher frog) protein is Esculentin-2SE.